We begin with the raw amino-acid sequence, 241 residues long: Ubiquinone biosynthesis O-methyltransferase (241 aa).

Positions 44, 64, 85, and 129 each coordinate S-adenosyl-L-methionine.

The protein belongs to the methyltransferase superfamily. UbiG/COQ3 family.

It catalyses the reaction a 3-demethylubiquinol + S-adenosyl-L-methionine = a ubiquinol + S-adenosyl-L-homocysteine + H(+). The enzyme catalyses a 3-(all-trans-polyprenyl)benzene-1,2-diol + S-adenosyl-L-methionine = a 2-methoxy-6-(all-trans-polyprenyl)phenol + S-adenosyl-L-homocysteine + H(+). The protein operates within cofactor biosynthesis; ubiquinone biosynthesis. In terms of biological role, O-methyltransferase that catalyzes the 2 O-methylation steps in the ubiquinone biosynthetic pathway. The chain is Ubiquinone biosynthesis O-methyltransferase from Serratia proteamaculans (strain 568).